The primary structure comprises 57 residues: UPF0057 membrane protein T23F2.3 (57 aa).

2 helical membrane-spanning segments follow: residues 4 to 24 (TCTD…GVFL) and 36 to 56 (ILLT…VILA).

It belongs to the UPF0057 (PMP3) family.

It is found in the membrane. This chain is UPF0057 membrane protein T23F2.3, found in Caenorhabditis elegans.